We begin with the raw amino-acid sequence, 534 residues long: Membrane protein insertase YidC (534 aa).

Helical transmembrane passes span 7-27 (IIAVVLSFIVLVGWGYLSEYM), 319-339 (AIDLGWFGFIARPLVTLLDFF), 342-362 (YVGNYGTAIILLTILIKLVFW), 413-433 (GGCLPMLVQIPVFFGLYQALL), and 493-513 (VMMFMPVVFTFLFLNFPSGLV).

It belongs to the OXA1/ALB3/YidC family. Type 1 subfamily. In terms of assembly, interacts with the Sec translocase complex via SecD. Specifically interacts with transmembrane segments of nascent integral membrane proteins during membrane integration.

The protein localises to the cell inner membrane. Functionally, required for the insertion and/or proper folding and/or complex formation of integral membrane proteins into the membrane. Involved in integration of membrane proteins that insert both dependently and independently of the Sec translocase complex, as well as at least some lipoproteins. Aids folding of multispanning membrane proteins. This chain is Membrane protein insertase YidC, found in Nitratidesulfovibrio vulgaris (strain ATCC 29579 / DSM 644 / CCUG 34227 / NCIMB 8303 / VKM B-1760 / Hildenborough) (Desulfovibrio vulgaris).